The primary structure comprises 399 residues: Large envelope protein (399 aa).

An N-acetylmethionine modification is found at Met-1. Gly-2 is lipidated: N-myristoyl glycine; by host. The interval 2–118 (GLSWTVPLEW…PPLRDTHPQA (117 aa)) is pre-S1. The segment at 2-173 (GLSWTVPLEW…FSRIGDPAPN (172 aa)) is pre-S. The Virion surface; in external conformation segment spans residues 2-180 (GLSWTVPLEW…APNMEGITSG (179 aa)). Topologically, residues 2–252 (GLSWTVPLEW…PGYRWMCLRR (251 aa)) are intravirion; in internal conformation. The N-linked (GlcNAc...) asparagine glycan is linked to Ser-4. The tract at residues 85 to 109 (KTLPADPPPASTNRQSGRQPTPITP) is disordered. Residues 95-105 (STNRQSGRQPT) show a composition bias toward polar residues. A pre-S2 region spans residues 119 to 173 (MQWNSTTFHQALQDPRVRGLYFPAGGSSSGTVNPVPTTASLISSIFSRIGDPAPN). The chain crosses the membrane as a helical span at residues 181-201 (FLGPLLVLQAGFFLLTKILTI). The Intravirion; in external conformation segment spans residues 202 to 252 (PQSLDSWWTSLNFLGGAPVCLGQNSQSPTSNHSPTSCPPICPGYRWMCLRR). The helical transmembrane segment at 253–273 (FIIFLFILLLCLIFLLVLLGY) threads the bilayer. Over 274-347 (QGMLPVCPLI…WASARFSWLS (74 aa)) the chain is Virion surface. An N-linked (GlcNAc...) asparagine; by host glycan is attached at Asn-319. Residues 348-368 (LLVPFVQWFAGLSPTVWLSVI) form a helical membrane-spanning segment. At 369–374 (WMMWYW) the chain is on the intravirion side. A helical transmembrane segment spans residues 375-397 (GPSLYNILSPFIPLLPIFFCLWV). The Virion surface portion of the chain corresponds to 398–399 (YI).

The protein belongs to the orthohepadnavirus major surface antigen family. In its internal form (Li-HBsAg), interacts with the capsid protein and with the isoform S. Interacts with host chaperone CANX. As to quaternary structure, associates with host chaperone CANX through its pre-S2 N glycan; this association may be essential for isoform M proper secretion. In terms of assembly, interacts with isoform L. Interacts with the antigens of satellite virus HDV (HDVAgs); this interaction is required for encapsidation of HDV genomic RNA. Post-translationally, isoform M is N-terminally acetylated by host at a ratio of 90%, and N-glycosylated by host at the pre-S2 region. In terms of processing, myristoylated.

It is found in the virion membrane. The large envelope protein exists in two topological conformations, one which is termed 'external' or Le-HBsAg and the other 'internal' or Li-HBsAg. In its external conformation the protein attaches the virus to cell receptors and thereby initiating infection. This interaction determines the species specificity and liver tropism. This attachment induces virion internalization predominantly through caveolin-mediated endocytosis. The large envelope protein also assures fusion between virion membrane and endosomal membrane. In its internal conformation the protein plays a role in virion morphogenesis and mediates the contact with the nucleocapsid like a matrix protein. Functionally, the middle envelope protein plays an important role in the budding of the virion. It is involved in the induction of budding in a nucleocapsid independent way. In this process the majority of envelope proteins bud to form subviral lipoprotein particles of 22 nm of diameter that do not contain a nucleocapsid. This chain is Large envelope protein, found in Hepatitis B virus genotype E (isolate Cote d'Ivoire/ABI-129/2003) (HBV-E).